Reading from the N-terminus, the 375-residue chain is Alpha-2,8-sialyltransferase 8B (375 aa).

The Cytoplasmic portion of the chain corresponds to 1–6 (MQLQFR). Residues 7–23 (SWMLAALTLLVVFLIFA) traverse the membrane as a helical; Signal-anchor for type II membrane protein segment. The Lumenal segment spans residues 24–375 (DISEIEEEIG…LTVGQCDGAT (352 aa)). N-linked (GlcNAc...) asparagine glycosylation is found at Asn-60, Asn-72, Asn-89, and Asn-134. 2 disulfide bridges follow: Cys-157–Cys-307 and Cys-171–Cys-371. 2 residues coordinate CMP-N-acetyl-beta-neuraminate: Asn-162 and Asn-185. Asn-219 and Asn-234 each carry an N-linked (GlcNAc...) asparagine glycan. CMP-N-acetyl-beta-neuraminate-binding residues include Thr-294, Thr-295, Gly-296, Trp-316, Tyr-329, and His-330. His-346 serves as the catalytic Proton donor/acceptor.

Belongs to the glycosyltransferase 29 family. Post-translationally, autopolysialylated. Autopolysialylation is not a prerequisite for the polysialylation acitity, but enhances the polysialylation acitity. Expressed only in newborn brain.

Its subcellular location is the golgi apparatus membrane. The protein localises to the secreted. It localises to the cell membrane. It carries out the reaction [N-acetyl-alpha-D-neuraminosyl-(2-&gt;8)](n) + CMP-N-acetyl-beta-neuraminate = [N-acetyl-alpha-D-neuraminosyl-(2-&gt;8)](n+1) + CMP + H(+). The protein operates within protein modification; protein glycosylation. Catalyzes the transfer of a sialic acid from a CMP-linked sialic acid donor onto a terminal alpha-2,3-, alpha-2,6-, or alpha-2,8-linked sialic acid of an N-linked glycan acceptor through alpha-2,8-linkages. Therefore, participates in polysialic acid synthesis on various sialylated N-acetyllactosaminyl oligosaccharides (alpha-2,3-, alpha-2,6-, or alpha-2,8-linked sialic acid), including NCAM1, NCAM1 N-glycans, FETUB N-glycans, and to a lesser extent sialylparagloboside (SPG) and AHSG, which does not require the initial addition of an alpha 2,8-sialic acid. However, does not exhibit sialic acid-polymerase activity. Catalyzes polysialic acid synthesis in the hippocampal on NCAM1 and supports neurite outgrowth. ST8SIA2-mediated polysialylation influences on oligodendrocyte differentiation and may promote the integrity of myelin and axons. This is Alpha-2,8-sialyltransferase 8B from Rattus norvegicus (Rat).